Consider the following 780-residue polypeptide: Ino eighty subunit 1 (780 aa).

2 disordered regions span residues 1–25 (MADV…QQIH) and 563–780 (ANGP…PGWN). Residues 563-584 (ANGPRRDRKKEREERQKAREEA) show a composition bias toward basic and acidic residues. The span at 600–613 (SRARAQRNAKRKLA) shows a compositional bias: basic residues. A compositionally biased stretch (low complexity) spans 614-635 (RAAAAASSTPSASTPKTAAARS). Acidic residues-rich tracts occupy residues 676–686 (LEGEESLDDID) and 723–751 (DADD…EGDD).

As to quaternary structure, component of the chromatin-remodeling INO80 complex.

Its subcellular location is the nucleus. Probably involved in transcription regulation via its interaction with the INO80 complex, a chromatin-remodeling complex. The chain is Ino eighty subunit 1 from Emericella nidulans (strain FGSC A4 / ATCC 38163 / CBS 112.46 / NRRL 194 / M139) (Aspergillus nidulans).